The following is a 319-amino-acid chain: 7,8-didemethyl-8-hydroxy-5-deazariboflavin synthase (319 aa).

One can recognise a Radical SAM core domain in the interval 5 to 236 (VTYSPAYTIV…SNITLQIPPN (232 aa)). Cys-19, Cys-23, and Cys-26 together coordinate [4Fe-4S] cluster.

It belongs to the radical SAM superfamily. CofG family. In terms of assembly, consists of two subunits, CofG and CofH. Requires [4Fe-4S] cluster as cofactor.

It carries out the reaction 5-amino-5-(4-hydroxybenzyl)-6-(D-ribitylimino)-5,6-dihydrouracil + S-adenosyl-L-methionine = 7,8-didemethyl-8-hydroxy-5-deazariboflavin + 5'-deoxyadenosine + L-methionine + NH4(+) + H(+). The protein operates within cofactor biosynthesis; coenzyme F0 biosynthesis. Functionally, catalyzes the radical-mediated synthesis of 7,8-didemethyl-8-hydroxy-5-deazariboflavin from 5-amino-5-(4-hydroxybenzyl)-6-(D-ribitylimino)-5,6-dihydrouracil. In Trichodesmium erythraeum (strain IMS101), this protein is 7,8-didemethyl-8-hydroxy-5-deazariboflavin synthase.